Here is a 61-residue protein sequence, read N- to C-terminus: Sperm protamine P1 (61 aa).

The interval 1–61 (MARFRRSRSR…RSSRRSRRRN (61 aa)) is disordered.

The protein belongs to the protamine P1 family. As to expression, testis.

It is found in the nucleus. The protein resides in the chromosome. Its function is as follows. Protamines substitute for histones in the chromatin of sperm during the haploid phase of spermatogenesis. They compact sperm DNA into a highly condensed, stable and inactive complex. The protein is Sperm protamine P1 (PRM1) of Ornithorhynchus anatinus (Duckbill platypus).